The chain runs to 355 residues: NADH-quinone oxidoreductase subunit H (355 aa).

8 consecutive transmembrane segments (helical) span residues 25-45 (IVRI…LILW), 91-111 (WLYL…WAVI), 126-146 (LLYA…AGWA), 170-190 (MGFA…SEIV), 205-225 (FLSW…VSGI), 253-273 (MAFA…SALA), 290-310 (FIPG…VFIW), and 330-350 (VFLP…MSPL).

The protein belongs to the complex I subunit 1 family. As to quaternary structure, NDH-1 is composed of 14 different subunits. Subunits NuoA, H, J, K, L, M, N constitute the membrane sector of the complex.

Its subcellular location is the cell inner membrane. The enzyme catalyses a quinone + NADH + 5 H(+)(in) = a quinol + NAD(+) + 4 H(+)(out). Functionally, NDH-1 shuttles electrons from NADH, via FMN and iron-sulfur (Fe-S) centers, to quinones in the respiratory chain. The immediate electron acceptor for the enzyme in this species is believed to be ubiquinone. Couples the redox reaction to proton translocation (for every two electrons transferred, four hydrogen ions are translocated across the cytoplasmic membrane), and thus conserves the redox energy in a proton gradient. This subunit may bind ubiquinone. The sequence is that of NADH-quinone oxidoreductase subunit H from Burkholderia ambifaria (strain MC40-6).